The following is a 424-amino-acid chain: MSILNNKEVIVIIDAWSGGKHLIPAFQALGYFCLHVQSTFLPEVFIADNQLAIARSDRHIVHDGNIETLLSQLQPYTIKAILAGSEGAVGLADCLNDALELTFSNQFELSAARRNKYLMQEQLALKGVASINQQLAGHSDELKQWLAGHAHWPVVLKPIQSAGTDGVFICHDLAQALQAFEAILAKKDFFGSPNREVLCQEFLAGEEFVVNGIACQGEYFFTELWQSKKQQRNGFPVYETQYLHYQNDAGFDVLTAYTVQVCQTLGINNGAFHAEVMMTSGGPVLIEIGARVAGGADPYIIEECLGHSQISKLAQAVLHPAKFLQECRRQHDFSGHRRAAYVYMISPSPGRVQVSPEEKFIKIDGVISINYHYAPGDIQQETCDLLSSPGVIIAIRDNPALLKQTIAEIRDVEADFYHLGLIDE.

Positions 120-318 (QEQLALKGVA…QISKLAQAVL (199 aa)) constitute an ATP-grasp domain. 147-209 (AGHAHWPVVL…QEFLAGEEFV (63 aa)) lines the ATP pocket. Glu-275 and Glu-287 together coordinate Mg(2+).

Mg(2+) is required as a cofactor. It depends on Mn(2+) as a cofactor.

It carries out the reaction 3-[[[(2R,3R)-3-carboxyoxiran-2-yl]carbonyl]amino]-L-alanine + L-valine + ATP = dapdiamide E + ADP + phosphate + H(+). The enzyme catalyses N(3)-fumaramoyl-(S)-2,3-diaminopropanoate + L-valine + ATP = dapdiamide A + ADP + phosphate + H(+). The catalysed reaction is N(3)-fumaramoyl-(S)-2,3-diaminopropanoate + L-isoleucine + ATP = dapdiamide B + ADP + phosphate + H(+). It catalyses the reaction N(3)-fumaramoyl-(S)-2,3-diaminopropanoate + L-leucine + ATP = dapdiamide C + ADP + phosphate + H(+). It functions in the pathway antibiotic biosynthesis. Its function is as follows. Involved in dapdiamide antibiotics biosynthesis. Ligates N-beta-fumaramoyl-DAP and valine, isoleucine or leucine to form dapdiamides A, B or C, respectively. Also ligates N-beta-epoxysuccinamoyl-DAP and valine to form dapdiamide E. The protein is Dapdiamide A synthase of Enterobacter agglomerans (Erwinia herbicola).